The sequence spans 119 residues: Large ribosomal subunit protein bL20 (119 aa).

Belongs to the bacterial ribosomal protein bL20 family.

In terms of biological role, binds directly to 23S ribosomal RNA and is necessary for the in vitro assembly process of the 50S ribosomal subunit. It is not involved in the protein synthesizing functions of that subunit. The chain is Large ribosomal subunit protein bL20 from Teredinibacter turnerae (strain ATCC 39867 / T7901).